The sequence spans 60 residues: Cytotoxin 2 (60 aa).

Disulfide bonds link Cys3-Cys21, Cys14-Cys38, Cys42-Cys53, and Cys54-Cys59.

This sequence belongs to the three-finger toxin family. Short-chain subfamily. Type IA cytotoxin sub-subfamily. As to quaternary structure, monomer in solution; Homodimer and oligomer in the presence of negatively charged lipids forming a pore with a size ranging between 20 and 30 Angstroms. Expressed by the venom gland.

The protein localises to the secreted. It is found in the target cell membrane. Its function is as follows. Shows cytolytic activity on many different cells by forming pore in lipid membranes. In vivo, increases heart rate or kills the animal by cardiac arrest. In addition, it binds to heparin with high affinity, interacts with Kv channel-interacting protein 1 (KCNIP1) in a calcium-independent manner, and binds to integrin alpha-V/beta-3 (ITGAV/ITGB3) with moderate affinity. This chain is Cytotoxin 2, found in Naja mossambica (Mozambique spitting cobra).